A 277-amino-acid chain; its full sequence is Large ribosomal subunit protein uL2c (277 aa).

The disordered stretch occupies residues 30–60; sequence RKKLTSGQHSGKGRNNRGIITSRHRGGGHKR. The span at 51–60 shows a compositional bias: basic residues; it reads SRHRGGGHKR.

The protein belongs to the universal ribosomal protein uL2 family. Part of the 50S ribosomal subunit.

The protein localises to the plastid. It is found in the chloroplast. In Angiopteris evecta (Mule's foot fern), this protein is Large ribosomal subunit protein uL2c (rpl2).